The chain runs to 196 residues: Imidazoleglycerol-phosphate dehydratase (196 aa).

Belongs to the imidazoleglycerol-phosphate dehydratase family.

Its subcellular location is the cytoplasm. It catalyses the reaction D-erythro-1-(imidazol-4-yl)glycerol 3-phosphate = 3-(imidazol-4-yl)-2-oxopropyl phosphate + H2O. The protein operates within amino-acid biosynthesis; L-histidine biosynthesis; L-histidine from 5-phospho-alpha-D-ribose 1-diphosphate: step 6/9. In Nitratidesulfovibrio vulgaris (strain DSM 19637 / Miyazaki F) (Desulfovibrio vulgaris), this protein is Imidazoleglycerol-phosphate dehydratase.